A 360-amino-acid chain; its full sequence is MTDLHSLESDLLAQVEGAADEAALEGVRVAALGKKGAVSELLKTLGSLSPEERRERGPLINGLRDRVQGAILARRETLAEAALAARLSAERIDVTLPVREGPETRGRVHPITQVIDEITAIFGDMGFAVAEGPDIETDELNFTALNFPEGHPAREMHDTFFLPPGRDGTRKLLRTHTSPVQVRTMRSQQPPIRVICPGRTYRHDSDQTHTPMFHQVEGLVIDRTATLAHLKWILEEFCKAFFEVESVKMRFRPSFFPFTEPSAEVDIQCSRKGGEIRFGEGDDWLEILGCGMVHPNVLRQCGLDPDEVQGFAWGMGIDRIAMLKYGMPDLRPFFEADVRWLDHYGFRPLDIPSLVGGLTG.

Residue glutamate 260 coordinates Mg(2+).

The protein belongs to the class-II aminoacyl-tRNA synthetase family. Phe-tRNA synthetase alpha subunit type 1 subfamily. In terms of assembly, tetramer of two alpha and two beta subunits. Requires Mg(2+) as cofactor.

The protein localises to the cytoplasm. The catalysed reaction is tRNA(Phe) + L-phenylalanine + ATP = L-phenylalanyl-tRNA(Phe) + AMP + diphosphate + H(+). In Methylobacterium sp. (strain 4-46), this protein is Phenylalanine--tRNA ligase alpha subunit.